A 436-amino-acid chain; its full sequence is Serine--tRNA ligase (436 aa).

242–244 (TAE) serves as a coordination point for L-serine. 273–275 (RSE) serves as a coordination point for ATP. Glu-296 contributes to the L-serine binding site. 360 to 363 (EISS) contacts ATP. Ser-395 contacts L-serine.

It belongs to the class-II aminoacyl-tRNA synthetase family. Type-1 seryl-tRNA synthetase subfamily. In terms of assembly, homodimer. The tRNA molecule binds across the dimer.

It is found in the cytoplasm. It catalyses the reaction tRNA(Ser) + L-serine + ATP = L-seryl-tRNA(Ser) + AMP + diphosphate + H(+). The catalysed reaction is tRNA(Sec) + L-serine + ATP = L-seryl-tRNA(Sec) + AMP + diphosphate + H(+). It participates in aminoacyl-tRNA biosynthesis; selenocysteinyl-tRNA(Sec) biosynthesis; L-seryl-tRNA(Sec) from L-serine and tRNA(Sec): step 1/1. Catalyzes the attachment of serine to tRNA(Ser). Is also able to aminoacylate tRNA(Sec) with serine, to form the misacylated tRNA L-seryl-tRNA(Sec), which will be further converted into selenocysteinyl-tRNA(Sec). The chain is Serine--tRNA ligase from Polynucleobacter asymbioticus (strain DSM 18221 / CIP 109841 / QLW-P1DMWA-1) (Polynucleobacter necessarius subsp. asymbioticus).